Consider the following 357-residue polypeptide: Ferrochelatase (357 aa).

Residues His193 and Glu272 each contribute to the Fe cation site.

This sequence belongs to the ferrochelatase family.

It localises to the cytoplasm. It carries out the reaction heme b + 2 H(+) = protoporphyrin IX + Fe(2+). It participates in porphyrin-containing compound metabolism; protoheme biosynthesis; protoheme from protoporphyrin-IX: step 1/1. Its function is as follows. Catalyzes the ferrous insertion into protoporphyrin IX. This is Ferrochelatase from Hyphomonas neptunium (strain ATCC 15444).